Here is a 688-residue protein sequence, read N- to C-terminus: Zinc finger CCCH domain-containing protein 22 (688 aa).

Residues 62 to 123 (ALLPPPPPPS…QPFSRSNGSV (62 aa)) are disordered. The span at 101–117 (PLSASSPSSWAQAQPFS) shows a compositional bias: low complexity. The C3H1-type zinc finger occupies 233–260 (GFGWKPCLYYARGFCKNGSSCRFVHGDD). The RRM domain occupies 366–442 (RQIYLTFPAD…RVLVKPYKEK (77 aa)). Residues 487 to 522 (TNEMMLRRKLEEQQQAAELQQAIELHSRRLMDLQLL) are a coiled coil. The interval 552-624 (LATTMVESPP…PTKSSVSAHQ (73 aa)) is disordered. Basic and acidic residues predominate over residues 574-589 (TEERKMVNGGGDKEES). Over residues 613–624 (ASPTKSSVSAHQ) the composition is skewed to polar residues.

The protein is Zinc finger CCCH domain-containing protein 22 of Oryza sativa subsp. japonica (Rice).